Reading from the N-terminus, the 1061-residue chain is NACHT, LRR and PYD domains-containing protein 12 (1061 aa).

One can recognise a Pyrin domain in the interval 1-95 (MLRTAGRDGL…WERGQREDLV (95 aa)). Residues 129–201 (YRDYVRRKFR…SPIKIETLFE (73 aa)) enclose the FISNA domain. One can recognise an NACHT domain in the interval 211–528 (RTVVMQGAAG…EFFAAMYYIL (318 aa)). Residue 217–224 (GAAGIGKS) coordinates ATP. LRR repeat units lie at residues 828-848 (HLVE…RLLC), 857-878 (RLRT…ELAS), 885-906 (SLRE…LLCE), 914-935 (KLQT…GLSV), 942-962 (NLRE…WLLA), 971-992 (RLQK…NLYF), 999-1020 (TLTD…LLCK), and 1028-1049 (KLRV…RLAA).

The protein belongs to the NLRP family. Interacts (via pyrin domain) with ASC. Interacts (via pyrin domain) with FAF1 (via UBA domain). Interacts with MAP3K14; this interaction promotes proteasomal degradation of MAP3K14. Interacts with NOD2; this interaction promotes degradation of NOD2 through the ubiquitin-proteasome pathway. Interacts with HSPA1A and HSPA8. Interacts with HSP90AA1. Interacts with TRIM25; this interaction inhibits RIGI-mediated signaling pathway. As to expression, detected only in peripheral blood leukocytes, predominantly in eosinophils and granulocytes, and at lower levels in monocytes.

The protein resides in the cytoplasm. Plays an essential role as an potent mitigator of inflammation. Primarily expressed in dendritic cells and macrophages, inhibits both canonical and non-canonical NF-kappa-B and ERK activation pathways. Functions as a negative regulator of NOD2 by targeting it to degradation via the proteasome pathway. In turn, promotes bacterial tolerance. Also inhibits the RIGI-mediated immune signaling against RNA viruses by reducing the E3 ubiquitin ligase TRIM25-mediated 'Lys-63'-linked RIGI activation but enhancing the E3 ubiquitin ligase RNF125-mediated 'Lys-48'-linked RIGI degradation. Also acts as a negative regulator of inflammatory response to mitigate obesity and obesity-associated diseases in adipose tissue. The chain is NACHT, LRR and PYD domains-containing protein 12 (NLRP12) from Homo sapiens (Human).